The sequence spans 617 residues: Pyrophosphate--fructose 6-phosphate 1-phosphotransferase subunit alpha 2 (617 aa).

It belongs to the phosphofructokinase type A (PFKA) family. PPi-dependent PFK group II subfamily. Clade 'Long' sub-subfamily. Tetramer of two alpha (regulatory) and two beta (catalytic) chains. In terms of tissue distribution, expressed in roots and specific parts such as the trichomes of leaves, cotyledon veins, as well as in stamen and gynoecium of flowers.

Its subcellular location is the cytoplasm. It functions in the pathway carbohydrate degradation; glycolysis; D-glyceraldehyde 3-phosphate and glycerone phosphate from D-glucose: step 3/4. Its activity is regulated as follows. Allosterically activated by fructose 2,6-bisphosphate. Its function is as follows. Regulatory subunit of pyrophosphate--fructose 6-phosphate 1-phosphotransferase. The sequence is that of Pyrophosphate--fructose 6-phosphate 1-phosphotransferase subunit alpha 2 from Arabidopsis thaliana (Mouse-ear cress).